We begin with the raw amino-acid sequence, 667 residues long: Alpha-1,4-glucan:maltose-1-phosphate maltosyltransferase (667 aa).

Alpha-maltose 1-phosphate-binding residues include Lys-261, Gln-321, and Asp-356. The active-site Nucleophile is the Asp-392. Position 393 (Asn-393) interacts with alpha-maltose 1-phosphate. Residue Glu-421 is the Proton donor of the active site. 534-535 (KY) provides a ligand contact to alpha-maltose 1-phosphate.

The protein belongs to the glycosyl hydrolase 13 family. GlgE subfamily. As to quaternary structure, homodimer.

It catalyses the reaction alpha-maltose 1-phosphate + [(1-&gt;4)-alpha-D-glucosyl](n) = [(1-&gt;4)-alpha-D-glucosyl](n+2) + phosphate. Functionally, maltosyltransferase that uses maltose 1-phosphate (M1P) as the sugar donor to elongate linear or branched alpha-(1-&gt;4)-glucans. Is involved in a branched alpha-glucan biosynthetic pathway from trehalose, together with TreS, Mak and GlgB. In Methylacidiphilum infernorum (isolate V4) (Methylokorus infernorum (strain V4)), this protein is Alpha-1,4-glucan:maltose-1-phosphate maltosyltransferase.